Here is a 243-residue protein sequence, read N- to C-terminus: Triosephosphate isomerase (243 aa).

Asn-9 to Lys-11 serves as a coordination point for substrate. The Electrophile role is filled by His-98. Glu-167 functions as the Proton acceptor in the catalytic mechanism. Substrate contacts are provided by residues Gly-173, Ser-205, and Gly-226–Gly-227.

This sequence belongs to the triosephosphate isomerase family. In terms of assembly, homodimer.

Its subcellular location is the cytoplasm. The catalysed reaction is D-glyceraldehyde 3-phosphate = dihydroxyacetone phosphate. Its pathway is carbohydrate biosynthesis; gluconeogenesis. The protein operates within carbohydrate degradation; glycolysis; D-glyceraldehyde 3-phosphate from glycerone phosphate: step 1/1. In terms of biological role, involved in the gluconeogenesis. Catalyzes stereospecifically the conversion of dihydroxyacetone phosphate (DHAP) to D-glyceraldehyde-3-phosphate (G3P). This is Triosephosphate isomerase from Mesomycoplasma hyorhinis (Mycoplasma hyorhinis).